A 328-amino-acid polypeptide reads, in one-letter code: Delta-aminolevulinic acid dehydratase (328 aa).

K200 functions as the Schiff-base intermediate with substrate in the catalytic mechanism. 5-aminolevulinate is bound by residues R210 and K222. Position 238 (E238) interacts with Mg(2+). The active-site Schiff-base intermediate with substrate is K253. The 5-aminolevulinate site is built by S279 and Y318.

Belongs to the ALAD family. In terms of assembly, homooctamer.

The enzyme catalyses 2 5-aminolevulinate = porphobilinogen + 2 H2O + H(+). Its pathway is porphyrin-containing compound metabolism; protoporphyrin-IX biosynthesis; coproporphyrinogen-III from 5-aminolevulinate: step 1/4. Stimulated by magnesium, inhibited by zinc. Its function is as follows. Catalyzes an early step in the biosynthesis of tetrapyrroles. Binds two molecules of 5-aminolevulinate per subunit, each at a distinct site, and catalyzes their condensation to form porphobilinogen. The polypeptide is Delta-aminolevulinic acid dehydratase (hemB) (Chlorobaculum parvum (strain DSM 263 / NCIMB 8327) (Chlorobium vibrioforme subsp. thiosulfatophilum)).